The sequence spans 415 residues: Serine hydroxymethyltransferase (415 aa).

(6S)-5,6,7,8-tetrahydrofolate is bound by residues Leu117 and 121-123 (GHL). Lys226 carries the post-translational modification N6-(pyridoxal phosphate)lysine. Residues Glu241 and 349–351 (SPF) contribute to the (6S)-5,6,7,8-tetrahydrofolate site.

The protein belongs to the SHMT family. Homodimer. It depends on pyridoxal 5'-phosphate as a cofactor.

Its subcellular location is the cytoplasm. The catalysed reaction is (6R)-5,10-methylene-5,6,7,8-tetrahydrofolate + glycine + H2O = (6S)-5,6,7,8-tetrahydrofolate + L-serine. Its pathway is one-carbon metabolism; tetrahydrofolate interconversion. The protein operates within amino-acid biosynthesis; glycine biosynthesis; glycine from L-serine: step 1/1. Catalyzes the reversible interconversion of serine and glycine with tetrahydrofolate (THF) serving as the one-carbon carrier. This reaction serves as the major source of one-carbon groups required for the biosynthesis of purines, thymidylate, methionine, and other important biomolecules. Also exhibits THF-independent aldolase activity toward beta-hydroxyamino acids, producing glycine and aldehydes, via a retro-aldol mechanism. In Geotalea uraniireducens (strain Rf4) (Geobacter uraniireducens), this protein is Serine hydroxymethyltransferase.